A 203-amino-acid chain; its full sequence is Orotate phosphoribosyltransferase (203 aa).

Residues R94, K95, K98, H100, and 119–127 (DDVATTGGS) contribute to the 5-phospho-alpha-D-ribose 1-diphosphate site. T123 and R151 together coordinate orotate.

The protein belongs to the purine/pyrimidine phosphoribosyltransferase family. PyrE subfamily. As to quaternary structure, homodimer. Requires Mg(2+) as cofactor.

It catalyses the reaction orotidine 5'-phosphate + diphosphate = orotate + 5-phospho-alpha-D-ribose 1-diphosphate. Its pathway is pyrimidine metabolism; UMP biosynthesis via de novo pathway; UMP from orotate: step 1/2. Catalyzes the transfer of a ribosyl phosphate group from 5-phosphoribose 1-diphosphate to orotate, leading to the formation of orotidine monophosphate (OMP). The chain is Orotate phosphoribosyltransferase from Staphylothermus marinus (strain ATCC 43588 / DSM 3639 / JCM 9404 / F1).